The following is a 231-amino-acid chain: 5'-methylthioadenosine/S-adenosylhomocysteine nucleosidase (231 aa).

Catalysis depends on Glu-12, which acts as the Proton acceptor. Substrate-binding positions include Gly-78, Ile-153, and 174 to 175 (ME). The Proton donor role is filled by Asp-198.

This sequence belongs to the PNP/UDP phosphorylase family. MtnN subfamily.

It catalyses the reaction S-adenosyl-L-homocysteine + H2O = S-(5-deoxy-D-ribos-5-yl)-L-homocysteine + adenine. The enzyme catalyses S-methyl-5'-thioadenosine + H2O = 5-(methylsulfanyl)-D-ribose + adenine. It carries out the reaction 5'-deoxyadenosine + H2O = 5-deoxy-D-ribose + adenine. It functions in the pathway amino-acid biosynthesis; L-methionine biosynthesis via salvage pathway; S-methyl-5-thio-alpha-D-ribose 1-phosphate from S-methyl-5'-thioadenosine (hydrolase route): step 1/2. Functionally, catalyzes the irreversible cleavage of the glycosidic bond in both 5'-methylthioadenosine (MTA) and S-adenosylhomocysteine (SAH/AdoHcy) to adenine and the corresponding thioribose, 5'-methylthioribose and S-ribosylhomocysteine, respectively. Also cleaves 5'-deoxyadenosine, a toxic by-product of radical S-adenosylmethionine (SAM) enzymes, into 5-deoxyribose and adenine. The protein is 5'-methylthioadenosine/S-adenosylhomocysteine nucleosidase of Shewanella putrefaciens (strain CN-32 / ATCC BAA-453).